The primary structure comprises 740 residues: Catalase-peroxidase (740 aa).

A cross-link (tryptophyl-tyrosyl-methioninium (Trp-Tyr) (with M-255)) is located at residues 107-229; it reads WHAAGTYRIH…LAAVQMGLIY (123 aa). His108 acts as the Proton acceptor in catalysis. Positions 229-255 form a cross-link, tryptophyl-tyrosyl-methioninium (Tyr-Met) (with W-107); that stretch reads YVNPEGPNGNPDPMAAAVDIRETFRRM. Position 270 (His270) interacts with heme b. Residue Trp321 is the Tryptophan radical intermediate of the active site.

Belongs to the peroxidase family. Peroxidase/catalase subfamily. In terms of assembly, homodimer. Requires heme b as cofactor. Formation of the three residue Trp-Tyr-Met cross-link is important for the catalase, but not the peroxidase activity of the enzyme.

The enzyme catalyses H2O2 + AH2 = A + 2 H2O. It carries out the reaction 2 H2O2 = O2 + 2 H2O. Functionally, bifunctional enzyme with both catalase and broad-spectrum peroxidase activity, oxidizing various electron donors including NADP(H). Protects M.tuberculosis against toxic reactive oxygen species (ROS) including hydrogen peroxide as well as organic peroxides and thus contributes to its survival within host macrophages by countering the phagocyte oxidative burst. Also displays efficient peroxynitritase activity, which may help the bacterium to persist in macrophages. Catalyzes the oxidative activation of the antitubercular pro-drug isoniazid (INH) to generate an isonicotinoyl radical that then reacts nonenzymatically with NAD to form an isonicotinoyl-NAD adduct which inhibits InhA. The protein is Catalase-peroxidase of Mycobacterium tuberculosis (strain CDC 1551 / Oshkosh).